Here is a 240-residue protein sequence, read N- to C-terminus: uncharacterized protein (240 aa).

3 consecutive transmembrane segments (helical) span residues 12–32, 66–86, and 89–109; these read ICIHISVNILFIDIYITILMS, IQVLNALTRLCIYLAIIFVLV, and ISGYAYVPIIFILIIIVIYFF. N-linked (GlcNAc...) asparagine; by host glycosylation is found at Asn129 and Asn157.

Its subcellular location is the membrane. This is an uncharacterized protein from Acanthamoeba polyphaga mimivirus (APMV).